A 485-amino-acid chain; its full sequence is ATP-dependent 6-phosphofructokinase (485 aa).

Residues G105, 171-172, and 196-199 contribute to the ATP site; these read RG and GDGT. D197 contributes to the Mg(2+) binding site. Residues 225 to 227, 270 to 272, E323, and 378 to 381 each bind substrate; these read TID, MGR, and YMIR. The Proton acceptor role is filled by D227. Residues 483–485 carry the Peroxisomal targeting signal motif; the sequence is SKL.

This sequence belongs to the phosphofructokinase type A (PFKA) family. PPi-dependent PFK group II subfamily. Atypical ATP-dependent clade 'X' sub-subfamily. As to quaternary structure, homotetramer. Mg(2+) is required as a cofactor.

Its subcellular location is the glycosome. It carries out the reaction beta-D-fructose 6-phosphate + ATP = beta-D-fructose 1,6-bisphosphate + ADP + H(+). Its pathway is carbohydrate degradation; glycolysis; D-glyceraldehyde 3-phosphate and glycerone phosphate from D-glucose: step 3/4. Its activity is regulated as follows. Allosterically activated by AMP. Functionally, catalyzes the phosphorylation of D-fructose 6-phosphate to fructose 1,6-bisphosphate by ATP, the first committing step of glycolysis. The protein is ATP-dependent 6-phosphofructokinase of Trypanosoma cruzi (strain CL Brener).